The primary structure comprises 289 residues: 33 kDa chaperonin (289 aa).

2 cysteine pairs are disulfide-bonded: cysteine 229-cysteine 231 and cysteine 262-cysteine 265.

It belongs to the HSP33 family. Under oxidizing conditions two disulfide bonds are formed involving the reactive cysteines. Under reducing conditions zinc is bound to the reactive cysteines and the protein is inactive.

The protein resides in the cytoplasm. In terms of biological role, redox regulated molecular chaperone. Protects both thermally unfolding and oxidatively damaged proteins from irreversible aggregation. Plays an important role in the bacterial defense system toward oxidative stress. In Pectobacterium atrosepticum (strain SCRI 1043 / ATCC BAA-672) (Erwinia carotovora subsp. atroseptica), this protein is 33 kDa chaperonin.